A 275-amino-acid chain; its full sequence is Ribosomal RNA small subunit methyltransferase A (275 aa).

S-adenosyl-L-methionine is bound by residues asparagine 27, leucine 29, glycine 54, glutamate 76, aspartate 102, and asparagine 123.

It belongs to the class I-like SAM-binding methyltransferase superfamily. rRNA adenine N(6)-methyltransferase family. RsmA subfamily.

It localises to the cytoplasm. It carries out the reaction adenosine(1518)/adenosine(1519) in 16S rRNA + 4 S-adenosyl-L-methionine = N(6)-dimethyladenosine(1518)/N(6)-dimethyladenosine(1519) in 16S rRNA + 4 S-adenosyl-L-homocysteine + 4 H(+). Functionally, specifically dimethylates two adjacent adenosines (A1518 and A1519) in the loop of a conserved hairpin near the 3'-end of 16S rRNA in the 30S particle. May play a critical role in biogenesis of 30S subunits. In Chelativorans sp. (strain BNC1), this protein is Ribosomal RNA small subunit methyltransferase A.